A 320-amino-acid polypeptide reads, in one-letter code: uncharacterized protein (320 aa).

Positions 1-23 (MKLNLRFPSYFLPVVAASAFLVS) are cleaved as a signal peptide. The N-palmitoyl cysteine moiety is linked to residue Cys24. Cys24 carries S-diacylglycerol cysteine lipidation. The disordered stretch occupies residues 160 to 181 (KNHEHGHTHKNGETHEHDHDHH).

Its subcellular location is the cell membrane. This is an uncharacterized protein from Mycoplasma pneumoniae (strain ATCC 29342 / M129 / Subtype 1) (Mycoplasmoides pneumoniae).